A 950-amino-acid chain; its full sequence is Nonsense-mediated mRNA decay factor SMG8 (950 aa).

Disordered regions lie at residues 560–607 and 624–651; these read HTGK…LSPT and NESQ…ADTE. Residues 568-582 are compositionally biased toward acidic residues; that stretch reads QDEDGEEDAEDEEGQ. The span at 593–607 shows a compositional bias: polar residues; sequence QNTASNGCSQPLSPT. Low complexity predominate over residues 624–648; the sequence is NESQASSEQLSNSEQNSTSSGTSSA.

It belongs to the SMG8 family.

Involved in nonsense-mediated decay (NMD) of mRNAs containing premature stop codons. Probable component of kinase complex containing nonC and recruited to stalled ribosomes. The sequence is that of Nonsense-mediated mRNA decay factor SMG8 from Drosophila yakuba (Fruit fly).